Reading from the N-terminus, the 475-residue chain is 3-isopropylmalate dehydratase large subunit (475 aa).

[4Fe-4S] cluster-binding residues include C353, C414, and C417.

The protein belongs to the aconitase/IPM isomerase family. LeuC type 1 subfamily. As to quaternary structure, heterodimer of LeuC and LeuD. It depends on [4Fe-4S] cluster as a cofactor.

It carries out the reaction (2R,3S)-3-isopropylmalate = (2S)-2-isopropylmalate. It participates in amino-acid biosynthesis; L-leucine biosynthesis; L-leucine from 3-methyl-2-oxobutanoate: step 2/4. Functionally, catalyzes the isomerization between 2-isopropylmalate and 3-isopropylmalate, via the formation of 2-isopropylmaleate. The polypeptide is 3-isopropylmalate dehydratase large subunit (Stutzerimonas stutzeri (strain A1501) (Pseudomonas stutzeri)).